The chain runs to 274 residues: Rhamnulose-1-phosphate aldolase (274 aa).

E117 is a catalytic residue. Zn(2+) is bound by residues H141, H143, and H212.

The protein belongs to the aldolase class II family. RhaD subfamily. Homotetramer. Zn(2+) is required as a cofactor.

It is found in the cytoplasm. The catalysed reaction is L-rhamnulose 1-phosphate = (S)-lactaldehyde + dihydroxyacetone phosphate. The protein operates within carbohydrate degradation; L-rhamnose degradation; glycerone phosphate from L-rhamnose: step 3/3. Its function is as follows. Catalyzes the reversible cleavage of L-rhamnulose-1-phosphate to dihydroxyacetone phosphate (DHAP) and L-lactaldehyde. This Escherichia coli O7:K1 (strain IAI39 / ExPEC) protein is Rhamnulose-1-phosphate aldolase.